The chain runs to 576 residues: Carboxypeptidase S (576 aa).

At 1 to 19 (MIALPVEKAPRKSLWQRHR) the chain is on the cytoplasmic side. A Glycyl lysine isopeptide (Lys-Gly) (interchain with G-Cter in ubiquitin) cross-link involves residue lysine 8. A helical transmembrane segment spans residues 20–40 (AFISGIVALIIIGTFFLTSGL). The Lumenal portion of the chain corresponds to 41–576 (HPAPPHEAKR…EYIVNVNEYA (536 aa)). Residues 44–65 (PPHEAKRPHHGKGPMHSPKCEK) are disordered. Residue asparagine 88 is glycosylated (N-linked (GlcNAc...) asparagine). Histidine 168 provides a ligand contact to Zn(2+). Aspartate 170 is a catalytic residue. Asparagine 176 carries N-linked (GlcNAc...) asparagine glycosylation. Residue aspartate 205 coordinates Zn(2+). Asparagine 228 is a glycosylation site (N-linked (GlcNAc...) asparagine). The active-site Proton acceptor is the glutamate 239. 2 residues coordinate Zn(2+): glutamate 240 and aspartate 268. Residues asparagine 381 and asparagine 525 are each glycosylated (N-linked (GlcNAc...) asparagine). Histidine 547 lines the Zn(2+) pocket.

This sequence belongs to the peptidase M20A family. YscS is synthesized as one polypeptide chain precursor which after carbohydrate modification in the secretory pathway yields two active precursor molecules. The proteolytically unprocessed forms are associated with the membrane, whereas the mature forms of the enzyme are soluble. Zn(2+) serves as cofactor. Post-translationally, glycosylated. In terms of processing, ubiquitinated. Ubiquitination mediates sorting into internal vesicles in late endosomes. TUL1 is required for ubiquitination.

The protein localises to the vacuole membrane. The catalysed reaction is Release of a C-terminal amino acid from a peptide in which glycine is the penultimate amino acid, e.g. Z-Gly-|-Leu.. Its function is as follows. Necessary for use of certain peptides as sole nitrogen source. May also cleave intracellularly generated peptides to recycle amino acids for protein synthesis. The chain is Carboxypeptidase S (CPS1) from Saccharomyces cerevisiae (strain ATCC 204508 / S288c) (Baker's yeast).